Here is a 298-residue protein sequence, read N- to C-terminus: 4-hydroxy-tetrahydrodipicolinate synthase (298 aa).

Residue Thr45 coordinates pyruvate. Catalysis depends on Tyr133, which acts as the Proton donor/acceptor. The Schiff-base intermediate with substrate role is filled by Lys161. Residue Ile203 coordinates pyruvate.

Belongs to the DapA family. In terms of assembly, homotetramer; dimer of dimers.

The protein resides in the cytoplasm. It catalyses the reaction L-aspartate 4-semialdehyde + pyruvate = (2S,4S)-4-hydroxy-2,3,4,5-tetrahydrodipicolinate + H2O + H(+). It participates in amino-acid biosynthesis; L-lysine biosynthesis via DAP pathway; (S)-tetrahydrodipicolinate from L-aspartate: step 3/4. Catalyzes the condensation of (S)-aspartate-beta-semialdehyde [(S)-ASA] and pyruvate to 4-hydroxy-tetrahydrodipicolinate (HTPA). The chain is 4-hydroxy-tetrahydrodipicolinate synthase from Wigglesworthia glossinidia brevipalpis.